The sequence spans 318 residues: tRNA U34 carboxymethyltransferase (318 aa).

Carboxy-S-adenosyl-L-methionine is bound by residues K88, W102, K107, G126, M192, Y196, and R311.

It belongs to the class I-like SAM-binding methyltransferase superfamily. CmoB family. Homotetramer.

The enzyme catalyses carboxy-S-adenosyl-L-methionine + 5-hydroxyuridine(34) in tRNA = 5-carboxymethoxyuridine(34) in tRNA + S-adenosyl-L-homocysteine + H(+). Catalyzes carboxymethyl transfer from carboxy-S-adenosyl-L-methionine (Cx-SAM) to 5-hydroxyuridine (ho5U) to form 5-carboxymethoxyuridine (cmo5U) at position 34 in tRNAs. The sequence is that of tRNA U34 carboxymethyltransferase from Pseudomonas fluorescens (strain Pf0-1).